The following is a 101-amino-acid chain: Small ribosomal subunit protein eS24 (101 aa).

The protein belongs to the eukaryotic ribosomal protein eS24 family.

The chain is Small ribosomal subunit protein eS24 from Methanosarcina acetivorans (strain ATCC 35395 / DSM 2834 / JCM 12185 / C2A).